A 143-amino-acid chain; its full sequence is Spore coat protein P (143 aa).

Residues 34 to 143 (FFDSEASTFV…VETVAFNKGL (110 aa)) form the sHSP domain.

It belongs to the small heat shock protein (HSP20) family.

The protein is Spore coat protein P (cotP) of Bacillus subtilis (strain 168).